A 216-amino-acid polypeptide reads, in one-letter code: Glycerol-3-phosphate acyltransferase 3 (216 aa).

The next 5 helical transmembrane spans lie at 6 to 26, 58 to 78, 92 to 112, 125 to 145, and 158 to 178; these read LLLVVIVSYLLGSIPFGYLVS, LVAALDVVKGVSAVAFAGLVI, ILFAQVLAGLAAVAGHIWPVF, FGGMIALCPVAAIFGGEVLII, and ITGVVGAYALLIPLTFISGFP.

The protein belongs to the PlsY family. In terms of assembly, probably interacts with PlsX.

It localises to the cell membrane. The catalysed reaction is an acyl phosphate + sn-glycerol 3-phosphate = a 1-acyl-sn-glycero-3-phosphate + phosphate. It participates in lipid metabolism; phospholipid metabolism. Its function is as follows. Catalyzes the transfer of an acyl group from acyl-phosphate (acyl-PO(4)) to glycerol-3-phosphate (G3P) to form lysophosphatidic acid (LPA). This enzyme utilizes acyl-phosphate as fatty acyl donor, but not acyl-CoA or acyl-ACP. This Dehalococcoides mccartyi (strain ATCC BAA-2266 / KCTC 15142 / 195) (Dehalococcoides ethenogenes (strain 195)) protein is Glycerol-3-phosphate acyltransferase 3.